Consider the following 594-residue polypeptide: Aspartate--tRNA(Asp/Asn) ligase (594 aa).

E173 serves as a coordination point for L-aspartate. Residues 197–200 (QLFK) form an aspartate region. Residue R219 coordinates L-aspartate. ATP is bound by residues 219 to 221 (RDE) and Q228. H451 contacts L-aspartate. E485 contacts ATP. R492 serves as a coordination point for L-aspartate. 537 to 540 (GWDR) is an ATP binding site. The segment at 566–594 (PLTDAPAPITAQQRKESGIDAQPKRVQQA) is disordered.

This sequence belongs to the class-II aminoacyl-tRNA synthetase family. Type 1 subfamily. Homodimer.

It localises to the cytoplasm. It catalyses the reaction tRNA(Asx) + L-aspartate + ATP = L-aspartyl-tRNA(Asx) + AMP + diphosphate. Functionally, aspartyl-tRNA synthetase with relaxed tRNA specificity since it is able to aspartylate not only its cognate tRNA(Asp) but also tRNA(Asn). Reaction proceeds in two steps: L-aspartate is first activated by ATP to form Asp-AMP and then transferred to the acceptor end of tRNA(Asp/Asn). The protein is Aspartate--tRNA(Asp/Asn) ligase of Mycobacterium tuberculosis (strain CDC 1551 / Oshkosh).